The following is a 456-amino-acid chain: Glutamyl-tRNA(Gln) amidotransferase subunit A (456 aa).

Residues Lys-74 and Ser-149 each act as charge relay system in the active site. The active-site Acyl-ester intermediate is Ser-173.

This sequence belongs to the amidase family. GatA subfamily. As to quaternary structure, heterotrimer of A, B and C subunits.

It catalyses the reaction L-glutamyl-tRNA(Gln) + L-glutamine + ATP + H2O = L-glutaminyl-tRNA(Gln) + L-glutamate + ADP + phosphate + H(+). Its function is as follows. Allows the formation of correctly charged Gln-tRNA(Gln) through the transamidation of misacylated Glu-tRNA(Gln) in organisms which lack glutaminyl-tRNA synthetase. The reaction takes place in the presence of glutamine and ATP through an activated gamma-phospho-Glu-tRNA(Gln). The chain is Glutamyl-tRNA(Gln) amidotransferase subunit A from Methanobrevibacter smithii (strain ATCC 35061 / DSM 861 / OCM 144 / PS).